The primary structure comprises 146 residues: Large ribosomal subunit protein uL15 (146 aa).

Residues 1–13 are compositionally biased toward basic and acidic residues; it reads MKLHELKAAEGSR. Residues 1–61 are disordered; the sequence is MKLHELKAAE…GGQTPLFRRM (61 aa). 2 stretches are compositionally biased toward gly residues: residues 23–35 and 42–52; these read TSSG…GRGQ and SGGGVRLGFEG.

This sequence belongs to the universal ribosomal protein uL15 family. In terms of assembly, part of the 50S ribosomal subunit.

Binds to the 23S rRNA. The sequence is that of Large ribosomal subunit protein uL15 from Streptococcus uberis (strain ATCC BAA-854 / 0140J).